Reading from the N-terminus, the 318-residue chain is Porphobilinogen deaminase (318 aa).

Cys-241 carries the S-(dipyrrolylmethanemethyl)cysteine modification.

It belongs to the HMBS family. As to quaternary structure, monomer. Dipyrromethane serves as cofactor.

The enzyme catalyses 4 porphobilinogen + H2O = hydroxymethylbilane + 4 NH4(+). The protein operates within porphyrin-containing compound metabolism; protoporphyrin-IX biosynthesis; coproporphyrinogen-III from 5-aminolevulinate: step 2/4. In terms of biological role, tetrapolymerization of the monopyrrole PBG into the hydroxymethylbilane pre-uroporphyrinogen in several discrete steps. The sequence is that of Porphobilinogen deaminase from Geobacter metallireducens (strain ATCC 53774 / DSM 7210 / GS-15).